The following is a 1202-amino-acid chain: Phospholipid-transporting ATPase 10 (1202 aa).

Topologically, residues 1–73 (MAGPSRRRRR…STKYTVASFF (73 aa)) are cytoplasmic. A helical transmembrane segment spans residues 74–95 (PKSLFEQFRRVANFYFLVTGIL). The Extracellular portion of the chain corresponds to 96–99 (SLTD). Residues 100–122 (LSPYGAVSALLPLALVISATMVK) traverse the membrane as a helical segment. Residues 123–305 (EGIEDWRRKQ…SRIERTMDKI (183 aa)) lie on the Cytoplasmic side of the membrane. The helical transmembrane segment at 306 to 327 (IYLMFGLVFLMSFVGSIIFGVE) threads the bilayer. Topologically, residues 328-364 (TREDKVKNGRTERWYLKPDDADIFFDPERAPMAAIYH) are extracellular. A helical transmembrane segment spans residues 365–382 (FFTATMLYSYFIPISLYV). Residues 383–920 (SIEIVKVLQS…HGHWCYSRIA (538 aa)) are Cytoplasmic-facing. The 4-aspartylphosphate intermediate role is filled by Asp-430. Mg(2+) is bound by residues Asp-865 and Asp-869. The helical transmembrane segment at 921–940 (SMICYFFYKNITFGVTVFLY) threads the bilayer. Topologically, residues 941–954 (EAYTSFSGQPAYND) are extracellular. The helical transmembrane segment at 955–974 (WFLSLFNVFFSSLPVIALGV) threads the bilayer. Residues 975 to 1004 (FDQDVSARFCYKFPLLYQEGVQNILFSWKR) are Cytoplasmic-facing. The helical transmembrane segment at 1005 to 1027 (IIGWMFNGFISALAIFFLCKESL) threads the bilayer. The Extracellular segment spans residues 1028-1040 (KHQLFDPDGKTAG). Residues 1041 to 1063 (REILGGTMYTCVVWVVNLQMALS) traverse the membrane as a helical segment. Over 1064–1069 (ISYFTW) the chain is Cytoplasmic. Residues 1070 to 1090 (VQHIVIWGSIAFWYIFLMIYG) form a helical membrane-spanning segment. Residues 1091 to 1107 (AMTPSFSTDAYMVFLEA) lie on the Extracellular side of the membrane. Residues 1108–1132 (LAPAPSYWLTTLFVMIFALIPYFVY) traverse the membrane as a helical segment. Over 1133–1202 (KSVQMRFFPK…DQIYKDLVGV (70 aa)) the chain is Cytoplasmic.

Belongs to the cation transport ATPase (P-type) (TC 3.A.3) family. Type IV subfamily.

The protein localises to the cell membrane. It carries out the reaction ATP + H2O + phospholipidSide 1 = ADP + phosphate + phospholipidSide 2.. Its function is as follows. Involved in transport of phospholipids. The sequence is that of Phospholipid-transporting ATPase 10 from Arabidopsis thaliana (Mouse-ear cress).